A 1174-amino-acid polypeptide reads, in one-letter code: Carboxylic acid reductase (1174 aa).

AMP-binding positions include histidine 297, serine 392, 413–414, threonine 418, aspartate 491, 503–506, lysine 512, and lysine 612; these read EG and YLDR. The Carrier domain occupies 651-726; it reads APVLVTVCRA…ALADYVEAAR (76 aa). Serine 685 bears the O-(pantetheine 4'-phosphoryl)serine mark. NADP(+) is bound by residues 787 to 791, arginine 814, arginine 824, 854 to 855, 880 to 882, 919 to 920, tyrosine 956, and lysine 960; these read TGFLG, DK, PAA, and TS.

The protein belongs to the ATP-dependent AMP-binding enzyme family. Carboxylic acid reductase subfamily. The cofactor is pantetheine 4'-phosphate.

It catalyses the reaction a carboxylate + ATP + NADPH + H(+) = an aldehyde + AMP + diphosphate + NADP(+). Functionally, catalyzes the ATP- and NADPH-dependent reduction of carboxylic acids to the corresponding aldehydes. Catalyzes the reduction of a wide range of aliphatic fatty acids (C6-C18) into their corresponding aldehydes. Can also reduce benzoate to benzaldehyde. Has a preference for NADPH over NADH as the electron donor. This Mycobacterium marinum (strain ATCC BAA-535 / M) protein is Carboxylic acid reductase.